The chain runs to 255 residues: Hemin import ATP-binding protein HmuV (255 aa).

In terms of domain architecture, ABC transporter spans 2-238 (LRVENLSIRR…EPLRAVFGLE (237 aa)). 34 to 41 (GPNGAGKS) is a binding site for ATP.

The protein belongs to the ABC transporter superfamily. Heme (hemin) importer (TC 3.A.1.14.5) family. As to quaternary structure, the complex is composed of two ATP-binding proteins (HmuV), two transmembrane proteins (HmuU) and a solute-binding protein (HmuT).

It is found in the cell inner membrane. In terms of biological role, part of the ABC transporter complex HmuTUV involved in hemin import. Responsible for energy coupling to the transport system. This Pseudomonas aeruginosa (strain ATCC 15692 / DSM 22644 / CIP 104116 / JCM 14847 / LMG 12228 / 1C / PRS 101 / PAO1) protein is Hemin import ATP-binding protein HmuV.